A 362-amino-acid polypeptide reads, in one-letter code: Thiol protease aleurain (362 aa).

Positions 1–22 (MAHARVLLLALAVLATAAVAVA) are cleaved as a signal peptide. Residues 23-143 (SSSSFADSNP…GNHLMRDAAA (121 aa)) constitute a propeptide, activation peptide. 2 disulfides stabilise this stretch: cysteine 165–cysteine 208 and cysteine 199–cysteine 241. Cysteine 168 is a catalytic residue. N-linked (GlcNAc...) asparagine glycosylation occurs at asparagine 188. Asparagine 257 is a glycosylation site (N-linked (GlcNAc...) asparagine). Cysteine 299 and cysteine 349 are joined by a disulfide. Catalysis depends on residues histidine 308 and asparagine 328.

This sequence belongs to the peptidase C1 family.

It localises to the vacuole. The enzyme catalyses Hydrolysis of proteins, acting as an aminopeptidase (notably, cleaving Arg-|-Xaa bonds) as well as an endopeptidase.. Functionally, may play a role in proteolysis leading to mobilization of nitrogen during senescence and starvation. In Hordeum vulgare (Barley), this protein is Thiol protease aleurain.